The primary structure comprises 316 residues: Taste receptor type 2 member 3 (316 aa).

The Extracellular portion of the chain corresponds to 1-7; sequence MLGFTEG. A helical transmembrane segment spans residues 8–28; sequence IFLVLTVTEFILGNLVNGFIV. Over 29–50 the chain is Cytoplasmic; it reads SVNGSHWFKSKKISLSDFIITS. The helical transmembrane segment at 51–71 threads the bilayer; it reads LALFRIFLLWIIFTDSLIIVF. Residues 72–86 lie on the Extracellular side of the membrane; sequence SYHTHDSGIRMQLID. Residues 87-107 traverse the membrane as a helical segment; the sequence is VFWTFTNHFSIWLISCLSVFY. The Cytoplasmic segment spans residues 108–128; the sequence is CLKIATFSHPSFLWLKWRASR. Residues 129 to 149 form a helical membrane-spanning segment; it reads VVVGMLWGALVLSCVCTMSLM. Residues 150 to 186 lie on the Extracellular side of the membrane; it reads NEFKIYSALTGSRDTQNMTEYIRLKRHEYNLMHVLGN. The N-linked (GlcNAc...) asparagine glycan is linked to Asn-166. A helical membrane pass occupies residues 187-207; it reads LWKIPSLIVSLIAYFLLLLSL. The Cytoplasmic portion of the chain corresponds to 208 to 234; it reads GKHTQQMQKYSVGSRDQSAEAHRRAMR. Residues 235-255 traverse the membrane as a helical segment; sequence IILSFLLFFLFYFLSFVILSS. Residues 256 to 266 are Extracellular-facing; that stretch reads SRFLPETKIAR. The chain crosses the membrane as a helical span at residues 267-287; the sequence is IIGVVITMSYLVGDSLILILG. Topologically, residues 288 to 316 are cytoplasmic; sequence NNKLKQTFVAILPCECGHPKPGSKRFFAS.

The protein belongs to the G-protein coupled receptor T2R family.

Its subcellular location is the membrane. Gustducin-coupled receptor implicated in the perception of bitter compounds in the oral cavity and the gastrointestinal tract. Signals through PLCB2 and the calcium-regulated cation channel TRPM5. In Rattus norvegicus (Rat), this protein is Taste receptor type 2 member 3.